A 171-amino-acid chain; its full sequence is Regulatory protein RecX (171 aa).

Belongs to the RecX family.

The protein localises to the cytoplasm. Modulates RecA activity. This Mycobacterium leprae (strain Br4923) protein is Regulatory protein RecX.